Consider the following 63-residue polypeptide: Large ribosomal subunit protein bL32 (63 aa).

Over residues 1-16 the composition is skewed to basic residues; that stretch reads MAVPKRKTSRMKRGFR. Positions 1-22 are disordered; sequence MAVPKRKTSRMKRGFRRSADAI.

The protein belongs to the bacterial ribosomal protein bL32 family.

This chain is Large ribosomal subunit protein bL32, found in Beijerinckia indica subsp. indica (strain ATCC 9039 / DSM 1715 / NCIMB 8712).